Reading from the N-terminus, the 632-residue chain is uncharacterized protein (632 aa).

4 consecutive transmembrane segments (helical) span residues 255–275 (LFYA…ELRV), 506–526 (IALL…LTSI), 566–586 (MIFA…SMVF), and 603–623 (IVVI…AVLF).

It is found in the cell membrane. This is an uncharacterized protein from Mycoplasma pneumoniae (strain ATCC 29342 / M129 / Subtype 1) (Mycoplasmoides pneumoniae).